The sequence spans 808 residues: Sucrose synthase isoform 1 (808 aa).

The interval 277 to 754 (MVFNVVILSP…GLKRIQEKYT (478 aa)) is GT-B glycosyltransferase.

It belongs to the glycosyltransferase 1 family. Plant sucrose synthase subfamily. In terms of assembly, homotetramer. In terms of tissue distribution, expressed in stems, in roots at different developmental stages, and in flower buds, flowers and maturing seeds, with the highest levels in strong utilization sinks for sucrose such as growing stems and tap root tips.

The enzyme catalyses an NDP-alpha-D-glucose + D-fructose = a ribonucleoside 5'-diphosphate + sucrose + H(+). Its activity is regulated as follows. Fructose acts as a non-competitive inhibitor with an inhibition constant of 17.2 mM. In contrast, glucose inhibits uncompetitively with an inhibition constant of 4.3 mM. In terms of biological role, sucrose-cleaving enzyme that provides UDP-glucose and fructose for various metabolic pathways. The chain is Sucrose synthase isoform 1 from Daucus carota (Wild carrot).